The primary structure comprises 426 residues: Probable histidine--tRNA ligase (426 aa).

This sequence belongs to the class-II aminoacyl-tRNA synthetase family. In terms of assembly, homodimer.

It is found in the cytoplasm. It catalyses the reaction tRNA(His) + L-histidine + ATP = L-histidyl-tRNA(His) + AMP + diphosphate + H(+). The protein is Probable histidine--tRNA ligase (hisS) of Tropheryma whipplei (strain TW08/27) (Whipple's bacillus).